Reading from the N-terminus, the 416-residue chain is Putative gustatory receptor 57a (416 aa).

Residues M1–V13 lie on the Cytoplasmic side of the membrane. The helical transmembrane segment at F14–I34 threads the bilayer. Residues R35–Y48 lie on the Extracellular side of the membrane. A helical transmembrane segment spans residues S49–A69. The Cytoplasmic segment spans residues E70–L83. The helical transmembrane segment at V84–I104 threads the bilayer. The Extracellular portion of the chain corresponds to S105–K143. Residues N144–V164 form a helical membrane-spanning segment. The Cytoplasmic portion of the chain corresponds to Q165–R171. The helical transmembrane segment at A172 to G192 threads the bilayer. Over Y193–R295 the chain is Extracellular. N290 carries an N-linked (GlcNAc...) asparagine glycan. Residues M296–F316 form a helical membrane-spanning segment. Over Y317–K374 the chain is Cytoplasmic. The chain crosses the membrane as a helical span at residues V375–M395. Over T396 to F416 the chain is Extracellular.

The protein belongs to the insect chemoreceptor superfamily. Gustatory receptor (GR) family. Gr57a subfamily. In terms of tissue distribution, in larvae, is expressed in neurons of the terminal external chemosensory organ as well as in the dorsal pharyngeal sense organ.

Its subcellular location is the cell membrane. Its function is as follows. Probable gustatory receptor which mediates acceptance or avoidance behavior, depending on its substrates. This Drosophila melanogaster (Fruit fly) protein is Putative gustatory receptor 57a (Gr57a).